The sequence spans 153 residues: Transcriptional repressor NrdR 3 (153 aa).

The segment at 1-26 is disordered; it reads MRCPFCGHDDTQVKDSRPTEDNSAIR. The segment at 3–34 is a zinc-finger region; it reads CPFCGHDDTQVKDSRPTEDNSAIRRRRSCPEC. Basic and acidic residues predominate over residues 7–24; sequence GHDDTQVKDSRPTEDNSA. The ATP-cone domain maps to 49 to 139; the sequence is LVVIKKDGGR…VYRNFREAKD (91 aa).

It belongs to the NrdR family. Zn(2+) is required as a cofactor.

In terms of biological role, negatively regulates transcription of bacterial ribonucleotide reductase nrd genes and operons by binding to NrdR-boxes. The sequence is that of Transcriptional repressor NrdR 3 from Paramagnetospirillum magneticum (strain ATCC 700264 / AMB-1) (Magnetospirillum magneticum).